Reading from the N-terminus, the 567-residue chain is Hydrogenase-2 large chain (567 aa).

Positions 61, 64, 546, and 549 each coordinate Ni(2+). The propeptide occupies 553 to 567; that stretch reads VVDADGNEVVSVKVL.

It belongs to the [NiFe]/[NiFeSe] hydrogenase large subunit family. In terms of assembly, heterodimer of a large and a small subunit. Ni(2+) serves as cofactor.

The protein resides in the cell membrane. The catalysed reaction is H2 + A = AH2. Its function is as follows. This is one of three E.coli hydrogenases synthesized in response to different physiological conditions. HYD2 is involved in hydrogen uptake. The protein is Hydrogenase-2 large chain (hybC) of Escherichia coli O157:H7.